The chain runs to 107 residues: Large ribosomal subunit protein uL24 (107 aa).

This sequence belongs to the universal ribosomal protein uL24 family. Part of the 50S ribosomal subunit.

One of two assembly initiator proteins, it binds directly to the 5'-end of the 23S rRNA, where it nucleates assembly of the 50S subunit. Its function is as follows. One of the proteins that surrounds the polypeptide exit tunnel on the outside of the subunit. This is Large ribosomal subunit protein uL24 from Thermotoga neapolitana (strain ATCC 49049 / DSM 4359 / NBRC 107923 / NS-E).